The primary structure comprises 261 residues: Carbonic anhydrase 1 (261 aa).

A disordered region spans residues 1 to 31 (MASPDWGYDDKNGPEQWSKLYPIANGNNQSP). Alanine 2 carries the N-acetylalanine modification. Positions 4–261 (PDWGYDDKNG…LKGRTVRASF (258 aa)) constitute an Alpha-carbonic anhydrase domain. The active-site Proton donor/acceptor is histidine 65. Positions 95, 97, and 120 each coordinate Zn(2+). Substrate is bound by residues threonine 200 and 200 to 201 (TH). The disordered stretch occupies residues 240–261 (VPMQHNNRPTQPLKGRTVRASF).

This sequence belongs to the alpha-carbonic anhydrase family. Zn(2+) is required as a cofactor.

The protein localises to the cytoplasm. It carries out the reaction hydrogencarbonate + H(+) = CO2 + H2O. The catalysed reaction is urea = cyanamide + H2O. Inhibited by acetazolamide. Functionally, catalyzes the reversible hydration of carbon dioxide. Can hydrate cyanamide to urea. The polypeptide is Carbonic anhydrase 1 (CA1) (Gorilla gorilla gorilla (Western lowland gorilla)).